The chain runs to 333 residues: Taste receptor type 2 member 38 (333 aa).

At 1 to 17 the chain is on the extracellular side; the sequence is MLTLTHICTVSYEVRST. The helical transmembrane segment at 18–38 threads the bilayer; sequence FLFISVLEFAVGFLTNAFISL. The Cytoplasmic segment spans residues 39–55; the sequence is VNFWDVVKRQPLSNSDC. A helical membrane pass occupies residues 56–76; that stretch reads VLLCLSISRLFLHGLLFLSAI. Over 77–94 the chain is Extracellular; it reads QLTHFQKLSEPLNHSYQV. Residues 95 to 115 form a helical membrane-spanning segment; sequence ILMLWMIANQANLWLAACLSL. The Cytoplasmic segment spans residues 116–142; that stretch reads LYCSKLIRFSHTFLICLASWVSRKISQ. Residues 143-163 form a helical membrane-spanning segment; that stretch reads MLLGIILCSCICTVLCVWCFF. The Extracellular portion of the chain corresponds to 164 to 190; that stretch reads GRLHFTVTTVLFMNNNTRLNWQIKDLN. Residue Asn-178 is glycosylated (N-linked (GlcNAc...) asparagine). The helical transmembrane segment at 191 to 211 threads the bilayer; that stretch reads LFYSFLFCYLWSVPPFLLFLV. Topologically, residues 212-251 are cytoplasmic; sequence SSGMLTVSLGRHMRTMKVYTRDSRDPSLEAHIKALKSLVS. The chain crosses the membrane as a helical span at residues 252-272; the sequence is FFCFFVISSCAAFISVPLLIL. Over 273-276 the chain is Extracellular; sequence WHDK. The helical transmembrane segment at 277–297 threads the bilayer; the sequence is IGVMVCVGIMAACPSGHAAVL. The Cytoplasmic portion of the chain corresponds to 298-333; sequence ISGNAKLRRAVTTILLWAQSSLKVRADHMADSRTLC.

It belongs to the G-protein coupled receptor T2R family.

It localises to the membrane. Its function is as follows. Receptor that may play a role in the perception of bitterness and is gustducin-linked. May play a role in sensing the chemical composition of the gastrointestinal content. The activity of this receptor may stimulate alpha gustducin, mediate PLC-beta-2 activation and lead to the gating of TRPM5. This Papio hamadryas (Hamadryas baboon) protein is Taste receptor type 2 member 38 (TAS2R38).